The chain runs to 420 residues: Glucose-1-phosphate adenylyltransferase (420 aa).

Alpha-D-glucose 1-phosphate is bound by residues tyrosine 107, glycine 172, 187–188, and serine 205; that span reads EK.

The protein belongs to the bacterial/plant glucose-1-phosphate adenylyltransferase family. As to quaternary structure, homotetramer.

The enzyme catalyses alpha-D-glucose 1-phosphate + ATP + H(+) = ADP-alpha-D-glucose + diphosphate. The protein operates within glycan biosynthesis; glycogen biosynthesis. Functionally, involved in the biosynthesis of ADP-glucose, a building block required for the elongation reactions to produce glycogen. Catalyzes the reaction between ATP and alpha-D-glucose 1-phosphate (G1P) to produce pyrophosphate and ADP-Glc. This chain is Glucose-1-phosphate adenylyltransferase, found in Sinorhizobium fredii (strain NBRC 101917 / NGR234).